The primary structure comprises 39 residues: Photosystem II reaction center protein L (39 aa).

The chain crosses the membrane as a helical span at residues 18–38 (SLYLGLLLVFVMGILFSSYFF).

It belongs to the PsbL family. In terms of assembly, PSII is composed of 1 copy each of membrane proteins PsbA, PsbB, PsbC, PsbD, PsbE, PsbF, PsbH, PsbI, PsbJ, PsbK, PsbL, PsbM, PsbT, PsbX, PsbY, Psb30/Ycf12, peripheral proteins PsbO, CyanoQ (PsbQ), PsbU, PsbV and a large number of cofactors. It forms dimeric complexes.

The protein localises to the cellular thylakoid membrane. One of the components of the core complex of photosystem II (PSII). PSII is a light-driven water:plastoquinone oxidoreductase that uses light energy to abstract electrons from H(2)O, generating O(2) and a proton gradient subsequently used for ATP formation. It consists of a core antenna complex that captures photons, and an electron transfer chain that converts photonic excitation into a charge separation. This subunit is found at the monomer-monomer interface and is required for correct PSII assembly and/or dimerization. The protein is Photosystem II reaction center protein L of Prochlorococcus marinus (strain NATL2A).